Consider the following 732-residue polypeptide: mRNA-binding protein puf3 (732 aa).

The disordered stretch occupies residues 98 to 123; sequence PDSLVSTPTAPSANHHGNPFPNGKQS. The segment covering 100-109 has biased composition (polar residues); it reads SLVSTPTAPS. The PUM-HD domain occupies 376–716; sequence QQSRVLYLFH…HLIMSVERFR (341 aa). Pumilio repeat units follow at residues 396 to 431, 432 to 468, 469 to 504, 505 to 540, 541 to 576, 577 to 611, 612 to 647, and 655 to 690; these read DILGNVVLFSTDQHGSRFIQQKLATATEEEREAVFQ, EIASTSCLQLMMDIFGNYVVQKYFEFGNEKQKQILLS, QIKGHVFSLSLQMYGCRVVQKAIEYISPEHQVQLIQ, ELDGHVLDCVCDQNGNHVIQKAIECIDTGHLQFILR, ALRPQIHVLSAHPYGCRVIQRAIEHCHSERKLIIEE, LLPHILKLTQDQYGNYVVQHILRTGSESDKKYIFD, LMIDHLLFLSCHKFASNVVERCISYISDVDRRRILN, and ENCSILMLMMKDKYANYVIQKLLDASPEEERDLLIS.

This sequence belongs to the PUF3 family.

Its subcellular location is the mitochondrion outer membrane. It localises to the cytoplasm. RNA-binding protein involved in post-transcriptional regulation. Predominantly binds to mRNAs encoding mitochondrial proteins and localizes them to the vicinity of mitochondria for translation. Regulates mitochondrial biogenesis, motility and morphology. This Schizosaccharomyces pombe (strain 972 / ATCC 24843) (Fission yeast) protein is mRNA-binding protein puf3 (puf3).